A 209-amino-acid chain; its full sequence is Orotate phosphoribosyltransferase (209 aa).

Residues arginine 96, lysine 100, histidine 102, and 122–130 (EDLISTGGS) each bind 5-phospho-alpha-D-ribose 1-diphosphate. Serine 126 serves as a coordination point for orotate.

It belongs to the purine/pyrimidine phosphoribosyltransferase family. PyrE subfamily. As to quaternary structure, homodimer. Mg(2+) serves as cofactor.

It catalyses the reaction orotidine 5'-phosphate + diphosphate = orotate + 5-phospho-alpha-D-ribose 1-diphosphate. The protein operates within pyrimidine metabolism; UMP biosynthesis via de novo pathway; UMP from orotate: step 1/2. Functionally, catalyzes the transfer of a ribosyl phosphate group from 5-phosphoribose 1-diphosphate to orotate, leading to the formation of orotidine monophosphate (OMP). The protein is Orotate phosphoribosyltransferase of Listeria monocytogenes serovar 1/2a (strain ATCC BAA-679 / EGD-e).